Consider the following 845-residue polypeptide: Protein TSD2 (845 aa).

Residues 193-283 (DVDSDSESDS…SASATRLTNA (91 aa)) form a disordered region. Basic and acidic residues-rich tracts occupy residues 202 to 212 (SDSHSDSHSDS) and 230 to 242 (ARSH…DGSG). The segment covering 243 to 272 (GKRKRGSHSPLSRRRQRHKQGQRHKPRHRS) has biased composition (basic residues).

It belongs to the CDC45 family.

It is found in the nucleus. Temperature-sensitive protein required for DNA synthesis. May be a transcription factor that regulates the level or influences the stability of DNA polymerases or auxiliary proteins. The protein is Protein TSD2 (TSD2) of Mycosarcoma maydis (Corn smut fungus).